The following is an 836-amino-acid chain: MAHRKLQQEVDRVFKKINEGLEIFNSYYERHESCTNNPSQKDKLESDLKREVKKLQRLREQIKSWQSSPDIKDKDSLLDYRRSVEIAMEKYKAVEKASKEKAYSNISLKKSETLDPQERERRDISEYLSQMIDELERQYDSLQVEIDKLLLLNKKKKTSSTTNDEKKEQYKRFQARYRWHQQQMELALRLLANEELDPQDVKNVQDDINYFVESNQDPDFVEDETIYDGLNLQSNEAIAHEVAQYFASQNAEDNNTSDANESLQDISKLSKKEQRKLEREAKKAAKLAAKNATGAAIPVAGPSSTPSPVIPVADASKETERSPSSSPIHNATKPEEAVKTSIKSPRSSADNLLPSLQKSPSSATPETPTNVHTHIHQTPNGITGATTLKPATLPAKPAGELKWAVAASQAVEKDRKVTSASSTISNTSTKTPTTAAATTTSSNANSRIGSALNTPKLSTSSLSLQPDNTGASSSAATAAAVLAAGAAAVHQNNQAFYRNMSSSHHPLVSLATNPKSEHEVATTVNQNGPENTTKKVMEQKEEESPEERNKLQVPTFGVFDDDFESDRDSETEPEEEEQPSTPKYLSLEQREAKTNEIKKEFVSDFETLLLPSGVQEFIMSSELYNSQIESKITYKRSRDMCEISRLVEVPQGVNPPSPLDAFRSTQQWDVMRCSLRDIIIGSERLKEDSSSIYAKILENFRTLEMFSLFYNYYFAITPLEREIAYKILNERDWKVSKDGTMWFLRQGEVKFFNEICEVGDYKIFKLDDWTVIDKINFRLDYSFLQPPVDTASEVRDVSVDNNNVNDQSNVTLEQQKQEISHGKQLLKQLKQGKISV.

Coiled coils occupy residues 36 to 68 (NNPS…WQSS), 119 to 195 (RERR…ANEE), and 255 to 292 (NTSD…AKNA). Polar residues predominate over residues 252–267 (EDNNTSDANESLQDIS). 4 disordered regions span residues 252–284 (EDNN…AKKA), 296–391 (AIPV…LKPA), 410–471 (AVEK…NTGA), and 513–532 (NPKS…PENT). Residues 268 to 283 (KLSKKEQRKLEREAKK) show a composition bias toward basic and acidic residues. Phosphoserine is present on residues serine 303, serine 307, and serine 322. A compositionally biased stretch (polar residues) spans 341 to 386 (SIKSPRSSADNLLPSLQKSPSSATPETPTNVHTHIHQTPNGITGAT). Positions 418 to 446 (TSASSTISNTSTKTPTTAAATTTSSNANS) are enriched in low complexity. Phosphoserine occurs at positions 446 and 450. Composition is skewed to polar residues over residues 447–468 (RIGS…QPDN) and 522–531 (TTVNQNGPEN). Lysine 535 is covalently cross-linked (Glycyl lysine isopeptide (Lys-Gly) (interchain with G-Cter in ubiquitin)). Positions 537 to 583 (MEQKEEESPEERNKLQVPTFGVFDDDFESDRDSETEPEEEEQPSTPK) are disordered. The segment covering 559–578 (FDDDFESDRDSETEPEEEEQ) has biased composition (acidic residues). Phosphoserine is present on residues serine 565 and serine 569. The residue at position 571 (threonine 571) is a Phosphothreonine. A Phosphoserine modification is found at serine 657. The stretch at 803–831 (NVNDQSNVTLEQQKQEISHGKQLLKQLKQ) forms a coiled coil.

The protein belongs to the CNOT2/3/5 family. As to quaternary structure, forms a NOT protein complex that comprises NOT1, NOT2, NOT3, NOT4 and NOT5. Subunit of the 1.0 MDa CCR4-NOT core complex that contains CCR4, CAF1, NOT1, NOT2, NOT3, NOT4, NOT5, CAF40 and CAF130. The core complex probably is part of a less characterized 1.9 MDa CCR4-NOT complex.

It is found in the cytoplasm. Its subcellular location is the nucleus. Acts as a component of the CCR4-NOT core complex, which in the nucleus seems to be a general transcription factor, and in the cytoplasm the major mRNA deadenylase involved in mRNA turnover. The NOT protein subcomplex negatively regulates the basal and activated transcription of many genes. Preferentially affects TC-type TATA element-dependent transcription. Could directly or indirectly inhibit component(s) of the general transcription machinery. This is General negative regulator of transcription subunit 3 (NOT3) from Saccharomyces cerevisiae (strain ATCC 204508 / S288c) (Baker's yeast).